A 160-amino-acid chain; its full sequence is Putative UPF0479 protein YBL113W-A (160 aa).

2 helical membrane-spanning segments follow: residues 39-59 (IVFCLPFFPALFFVPVQKVLQ) and 136-156 (VPMIWLDVFQVFFVFLIISQH).

It belongs to the UPF0479 family.

It is found in the membrane. This Saccharomyces cerevisiae (strain ATCC 204508 / S288c) (Baker's yeast) protein is Putative UPF0479 protein YBL113W-A.